Consider the following 377-residue polypeptide: Gastricsin (377 aa).

The first 5 residues, 1 to 5 (QLLEA), serve as a signal peptide directing secretion. 2 consecutive propeptides (activation peptide) follow at residues 6–31 (AVVKVPLKKFKSIRETMKEKGLLGEF) and 32–48 (LRTHKYDPAWKYHFGDL). In terms of domain architecture, Peptidase A1 spans 62-374 (YFGEISIGTP…DLSNNRVGFA (313 aa)). D80 is an active-site residue. Cystine bridges form between C93–C98 and C256–C260. D265 is an active-site residue. A disulfide bond links C299 and C332.

Belongs to the peptidase A1 family. In terms of processing, each pepsinogen is converted to corresponding pepsin at pH 2.0 in part as a result of the release of a 47 AA activation segment and in part as a result of stepwise proteolytic cleavage via an intermediate form(s).

Its subcellular location is the secreted. The enzyme catalyses More restricted specificity than pepsin A, but shows preferential cleavage at Tyr-|-Xaa bonds. High activity on hemoglobin.. In terms of biological role, hydrolyzes a variety of proteins. This chain is Gastricsin (PGC), found in Macaca fuscata fuscata (Japanese macaque).